A 250-amino-acid chain; its full sequence is Beta-crystallin B1 (250 aa).

Positions 1–47 (MSQVAKAAATTAVNPGPDGKGKGTPSTGTAPAPGPTPVPASVPRPAA) are disordered. Serine 2 bears the N-acetylserine mark. Residues 2-56 (SQVAKAAATTAVNPGPDGKGKGTPSTGTAPAPGPTPVPASVPRPAAKVGELPPGS) form an N-terminal arm region. Residues 32–42 (APGPTPVPASV) are compositionally biased toward pro residues. 2 Beta/gamma crystallin 'Greek key' domains span residues 57 to 96 (YRLVVFEQENFQGRRVEFSGECLNLGDRGFDRVRSLIVLS) and 97 to 141 (GPWV…RPIR). Residues 142–146 (MDSQE) form a connecting peptide region. Beta/gamma crystallin 'Greek key' domains are found at residues 147 to 188 (HKIC…TVSS) and 189 to 231 (GTWV…RRLR). A C-terminal arm region spans residues 233–250 (RQWHQEGCFPVLTAEPPK).

Belongs to the beta/gamma-crystallin family. In terms of assembly, homo/heterodimer, or complexes of higher-order. The structure of beta-crystallin oligomers seems to be stabilized through interactions between the N-terminal arms. Specific cleavages in the N-terminal arm occur during lens maturation and give rise to truncated forms, leading to impaired oligomerization and protein insolubilization. The protease responsible for this partial degradation could be calpain II.

In terms of biological role, crystallins are the dominant structural components of the vertebrate eye lens. The chain is Beta-crystallin B1 (Crybb1) from Rattus norvegicus (Rat).